The following is a 340-amino-acid chain: DNA-directed RNA polymerase subunit alpha (340 aa).

The alpha N-terminal domain (alpha-NTD) stretch occupies residues 1 to 236; the sequence is MLSLSKNWNT…EQLQLFISFE (236 aa). Positions 251–340 are alpha C-terminal domain (alpha-CTD); that stretch reads FSPYLLKRVD…LSKRYEDSYN (90 aa).

It belongs to the RNA polymerase alpha chain family. Homodimer. The RNAP catalytic core consists of 2 alpha, 1 beta, 1 beta' and 1 omega subunit. When a sigma factor is associated with the core the holoenzyme is formed, which can initiate transcription.

It carries out the reaction RNA(n) + a ribonucleoside 5'-triphosphate = RNA(n+1) + diphosphate. Functionally, DNA-dependent RNA polymerase catalyzes the transcription of DNA into RNA using the four ribonucleoside triphosphates as substrates. This is DNA-directed RNA polymerase subunit alpha from Rickettsia rickettsii (strain Iowa).